Reading from the N-terminus, the 527-residue chain is Catalase (527 aa).

A compositionally biased stretch (basic and acidic residues) spans Met-1–Gln-22. A disordered region spans residues Met-1–Pro-34. Ala-2 bears the N-acetylalanine mark. The residue at position 9 (Ser-9) is a Phosphoserine. N6-succinyllysine is present on Lys-13. Catalysis depends on residues His-75 and Asn-148. His-194, Ser-201, Arg-203, and Asn-213 together coordinate NADP(+). Position 221 is an N6-succinyllysine (Lys-221). N6-acetyllysine is present on Lys-233. The NADP(+) site is built by Lys-237, Trp-303, His-305, and Lys-306. Lys-306 is modified (N6-acetyllysine; alternate). At Lys-306 the chain carries N6-succinyllysine; alternate. Residue Tyr-358 coordinates heme. Phosphoserine occurs at positions 417 and 434. N6-acetyllysine; alternate is present on residues Lys-449 and Lys-480. 2 positions are modified to N6-succinyllysine; alternate: Lys-449 and Lys-480. The residue at position 511 (Thr-511) is a Phosphothreonine. Residue Ser-517 is modified to Phosphoserine. Position 522 is an N6-succinyllysine (Lys-522). A Microbody targeting signal; atypical motif is present at residues Lys-524 to Leu-527.

This sequence belongs to the catalase family. As to quaternary structure, homotetramer. Interacts (via microbody targeting signal) with PEX5, monomeric form interacts with PEX5, leading to its translocation into peroxisomes. The cofactor is heme. NADP(+) is required as a cofactor. In terms of tissue distribution, expressed in renal proximal tubules (at protein level).

It localises to the peroxisome matrix. The catalysed reaction is 2 H2O2 = O2 + 2 H2O. In terms of biological role, catalyzes the degradation of hydrogen peroxide (H(2)O(2)) generated by peroxisomal oxidases to water and oxygen, thereby protecting cells from the toxic effects of hydrogen peroxide. Promotes growth of cells including T-cells, B-cells, myeloid leukemia cells, melanoma cells, mastocytoma cells and normal and transformed fibroblast cells. The sequence is that of Catalase (Cat) from Rattus norvegicus (Rat).